The chain runs to 194 residues: Potassium-transporting ATPase KdpC subunit (194 aa).

A helical membrane pass occupies residues 12 to 34 (LFLLLLTGGVYPLLTTALGQWWF).

This sequence belongs to the KdpC family. The system is composed of three essential subunits: KdpA, KdpB and KdpC.

The protein resides in the cell inner membrane. Its function is as follows. Part of the high-affinity ATP-driven potassium transport (or Kdp) system, which catalyzes the hydrolysis of ATP coupled with the electrogenic transport of potassium into the cytoplasm. This subunit acts as a catalytic chaperone that increases the ATP-binding affinity of the ATP-hydrolyzing subunit KdpB by the formation of a transient KdpB/KdpC/ATP ternary complex. The polypeptide is Potassium-transporting ATPase KdpC subunit (Salmonella schwarzengrund (strain CVM19633)).